A 382-amino-acid polypeptide reads, in one-letter code: Anhydro-N-acetylmuramic acid kinase (382 aa).

Residue G9–D16 coordinates ATP.

The protein belongs to the anhydro-N-acetylmuramic acid kinase family.

The enzyme catalyses 1,6-anhydro-N-acetyl-beta-muramate + ATP + H2O = N-acetyl-D-muramate 6-phosphate + ADP + H(+). It functions in the pathway amino-sugar metabolism; 1,6-anhydro-N-acetylmuramate degradation. It participates in cell wall biogenesis; peptidoglycan recycling. In terms of biological role, catalyzes the specific phosphorylation of 1,6-anhydro-N-acetylmuramic acid (anhMurNAc) with the simultaneous cleavage of the 1,6-anhydro ring, generating MurNAc-6-P. Is required for the utilization of anhMurNAc either imported from the medium or derived from its own cell wall murein, and thus plays a role in cell wall recycling. The sequence is that of Anhydro-N-acetylmuramic acid kinase from Bacillus anthracis (strain A0248).